The following is a 407-amino-acid chain: Phosphopentomutase (407 aa).

The Mn(2+) site is built by Asp-10, Asp-306, His-311, Asp-347, His-348, and His-359.

Belongs to the phosphopentomutase family. Requires Mn(2+) as cofactor.

It localises to the cytoplasm. It carries out the reaction 2-deoxy-alpha-D-ribose 1-phosphate = 2-deoxy-D-ribose 5-phosphate. The enzyme catalyses alpha-D-ribose 1-phosphate = D-ribose 5-phosphate. Its pathway is carbohydrate degradation; 2-deoxy-D-ribose 1-phosphate degradation; D-glyceraldehyde 3-phosphate and acetaldehyde from 2-deoxy-alpha-D-ribose 1-phosphate: step 1/2. Isomerase that catalyzes the conversion of deoxy-ribose 1-phosphate (dRib-1-P) and ribose 1-phosphate (Rib-1-P) to deoxy-ribose 5-phosphate (dRib-5-P) and ribose 5-phosphate (Rib-5-P), respectively. The chain is Phosphopentomutase from Edwardsiella ictaluri (strain 93-146).